Reading from the N-terminus, the 514-residue chain is Putative selenium-binding protein (514 aa).

This sequence belongs to the selenium-binding protein family.

The chain is Putative selenium-binding protein from Caenorhabditis briggsae.